We begin with the raw amino-acid sequence, 416 residues long: Serine hydroxymethyltransferase (416 aa).

Residues Leu117 and 121–123 (GHL) each bind (6S)-5,6,7,8-tetrahydrofolate. Residue Lys225 is modified to N6-(pyridoxal phosphate)lysine. 351–353 (SPF) provides a ligand contact to (6S)-5,6,7,8-tetrahydrofolate.

It belongs to the SHMT family. As to quaternary structure, homodimer. Requires pyridoxal 5'-phosphate as cofactor.

It localises to the cytoplasm. The catalysed reaction is (6R)-5,10-methylene-5,6,7,8-tetrahydrofolate + glycine + H2O = (6S)-5,6,7,8-tetrahydrofolate + L-serine. The protein operates within one-carbon metabolism; tetrahydrofolate interconversion. Its pathway is amino-acid biosynthesis; glycine biosynthesis; glycine from L-serine: step 1/1. Catalyzes the reversible interconversion of serine and glycine with tetrahydrofolate (THF) serving as the one-carbon carrier. This reaction serves as the major source of one-carbon groups required for the biosynthesis of purines, thymidylate, methionine, and other important biomolecules. Also exhibits THF-independent aldolase activity toward beta-hydroxyamino acids, producing glycine and aldehydes, via a retro-aldol mechanism. This is Serine hydroxymethyltransferase from Blochmanniella pennsylvanica (strain BPEN).